Reading from the N-terminus, the 367-residue chain is tRNA/tmRNA (uracil-C(5))-methyltransferase (367 aa).

5 residues coordinate S-adenosyl-L-methionine: glutamine 190, tyrosine 218, asparagine 223, glutamate 239, and aspartate 299. Cysteine 324 functions as the Nucleophile in the catalytic mechanism. Glutamate 358 acts as the Proton acceptor in catalysis.

Belongs to the class I-like SAM-binding methyltransferase superfamily. RNA M5U methyltransferase family. TrmA subfamily.

It carries out the reaction uridine(54) in tRNA + S-adenosyl-L-methionine = 5-methyluridine(54) in tRNA + S-adenosyl-L-homocysteine + H(+). It catalyses the reaction uridine(341) in tmRNA + S-adenosyl-L-methionine = 5-methyluridine(341) in tmRNA + S-adenosyl-L-homocysteine + H(+). Its function is as follows. Dual-specificity methyltransferase that catalyzes the formation of 5-methyluridine at position 54 (m5U54) in all tRNAs, and that of position 341 (m5U341) in tmRNA (transfer-mRNA). This chain is tRNA/tmRNA (uracil-C(5))-methyltransferase, found in Yersinia enterocolitica serotype O:8 / biotype 1B (strain NCTC 13174 / 8081).